The chain runs to 310 residues: Manganese ABC transporter substrate-binding lipoprotein scaA (310 aa).

A signal peptide spans 1-19; that stretch reads MKKCRFLVLLLLAFVGLAA. A lipid anchor (N-palmitoyl cysteine) is attached at Cys20. Cys20 is lipidated: S-diacylglycerol cysteine. Residues His68, His140, Glu206, and Asp281 each coordinate Mn(2+).

The protein belongs to the bacterial solute-binding protein 9 family. Lipoprotein receptor antigen (Lrai) subfamily. The complex is composed of two ATP-binding proteins (ScaC), two transmembrane proteins (ScaB) and a solute-binding protein (ScaA).

The protein resides in the cell membrane. Part of ATP-binding cassette (ABC) transport system ScaABC involved in manganese import. Essential for growth under Mn(2+)-limiting conditions. Also acts as an adhesin which is involved on adherence to extracellular matrix. It is an important factor in pathogenesis and infection. This chain is Manganese ABC transporter substrate-binding lipoprotein scaA, found in Streptococcus gordonii.